Consider the following 562-residue polypeptide: 3-(3-hydroxy-phenyl)propionate/3-hydroxycinnamic acid hydroxylase (562 aa).

FAD is bound by residues 8 to 37 and 275 to 285; these read DVVIVGAGPVGLTLANILGGQGVRTLIIEE and FRKGRMLLAGD.

This sequence belongs to the PheA/TfdB FAD monooxygenase family. FAD serves as cofactor.

It catalyses the reaction 3-(3-hydroxyphenyl)propanoate + NADH + O2 + H(+) = 3-(2,3-dihydroxyphenyl)propanoate + NAD(+) + H2O. The catalysed reaction is (2E)-3-(3-hydroxyphenyl)prop-2-enoate + NADH + O2 + H(+) = (2E)-3-(2,3-dihydroxyphenyl)prop-2-enoate + NAD(+) + H2O. Its pathway is aromatic compound metabolism; 3-phenylpropanoate degradation. Functionally, catalyzes the insertion of one atom of molecular oxygen into position 2 of the phenyl ring of 3-(3-hydroxyphenyl)propionate (3-HPP) and hydroxycinnamic acid (3HCI). The protein is 3-(3-hydroxy-phenyl)propionate/3-hydroxycinnamic acid hydroxylase of Mycolicibacterium smegmatis (strain ATCC 700084 / mc(2)155) (Mycobacterium smegmatis).